Reading from the N-terminus, the 490-residue chain is Bifunctional protein HldE (490 aa).

A ribokinase region spans residues 1 to 330 (MFDFDDLSQA…RKILPHAYRA (330 aa)). ATP is bound at residue 205 to 208 (NRKE). Asp275 is an active-site residue. Residues 358 to 490 (FTNGCFDILH…LVDRARSDQR (133 aa)) are cytidylyltransferase.

The protein in the N-terminal section; belongs to the carbohydrate kinase PfkB family. This sequence in the C-terminal section; belongs to the cytidylyltransferase family. As to quaternary structure, homodimer.

The catalysed reaction is D-glycero-beta-D-manno-heptose 7-phosphate + ATP = D-glycero-beta-D-manno-heptose 1,7-bisphosphate + ADP + H(+). It catalyses the reaction D-glycero-beta-D-manno-heptose 1-phosphate + ATP + H(+) = ADP-D-glycero-beta-D-manno-heptose + diphosphate. Its pathway is nucleotide-sugar biosynthesis; ADP-L-glycero-beta-D-manno-heptose biosynthesis; ADP-L-glycero-beta-D-manno-heptose from D-glycero-beta-D-manno-heptose 7-phosphate: step 1/4. It participates in nucleotide-sugar biosynthesis; ADP-L-glycero-beta-D-manno-heptose biosynthesis; ADP-L-glycero-beta-D-manno-heptose from D-glycero-beta-D-manno-heptose 7-phosphate: step 3/4. Functionally, catalyzes the phosphorylation of D-glycero-D-manno-heptose 7-phosphate at the C-1 position to selectively form D-glycero-beta-D-manno-heptose-1,7-bisphosphate. Its function is as follows. Catalyzes the ADP transfer from ATP to D-glycero-beta-D-manno-heptose 1-phosphate, yielding ADP-D-glycero-beta-D-manno-heptose. This Bradyrhizobium sp. (strain ORS 278) protein is Bifunctional protein HldE.